A 170-amino-acid chain; its full sequence is Peptide deformylase (170 aa).

2 residues coordinate Fe cation: C88 and H130. E131 is an active-site residue. A Fe cation-binding site is contributed by H134.

Belongs to the polypeptide deformylase family. Fe(2+) is required as a cofactor.

It catalyses the reaction N-terminal N-formyl-L-methionyl-[peptide] + H2O = N-terminal L-methionyl-[peptide] + formate. Functionally, removes the formyl group from the N-terminal Met of newly synthesized proteins. Requires at least a dipeptide for an efficient rate of reaction. N-terminal L-methionine is a prerequisite for activity but the enzyme has broad specificity at other positions. The sequence is that of Peptide deformylase from Acetivibrio thermocellus (strain ATCC 27405 / DSM 1237 / JCM 9322 / NBRC 103400 / NCIMB 10682 / NRRL B-4536 / VPI 7372) (Clostridium thermocellum).